The following is a 1227-amino-acid chain: Pesticidal crystal protein Cry1Be (1227 aa).

It belongs to the delta endotoxin family.

Promotes colloidosmotic lysis by binding to the midgut epithelial cells of many lepidopteran larvae. The chain is Pesticidal crystal protein Cry1Be (cry1Be) from Bacillus thuringiensis.